The primary structure comprises 261 residues: 14-3-3-like protein A (261 aa).

This sequence belongs to the 14-3-3 family.

In Vicia faba (Broad bean), this protein is 14-3-3-like protein A.